A 153-amino-acid polypeptide reads, in one-letter code: Sperm surface protein Sp17 (153 aa).

The disordered stretch occupies residues 74–117; sequence FKVPSGATESKEAPPEKSEPEKETPQEVVKEQETQVSFVEEVST. A compositionally biased stretch (basic and acidic residues) spans 82–106; it reads ESKEAPPEKSEPEKETPQEVVKEQE. In terms of domain architecture, IQ spans 122–151; it reads AAAAAVKIQAAFRGHKARKEVKIMKESSIE.

In terms of assembly, homodimer. May interact with ROPN1. Testis- and sperm-specific.

It is found in the membrane. Its function is as follows. Sperm surface zona pellucida binding protein. Helps to bind spermatozoa to the zona pellucida with high affinity. Might function in binding zona pellucida and carbohydrates. The chain is Sperm surface protein Sp17 (SPA17) from Notamacropus eugenii (Tammar wallaby).